The chain runs to 146 residues: Large ribosomal subunit protein bL21 (146 aa).

Over residues proline 95–glycine 104 the composition is skewed to basic residues. The interval proline 95 to asparagine 146 is disordered. Residues lysine 115 to asparagine 146 show a composition bias toward low complexity.

Belongs to the bacterial ribosomal protein bL21 family. Part of the 50S ribosomal subunit. Contacts protein L20.

Its function is as follows. This protein binds to 23S rRNA in the presence of protein L20. The polypeptide is Large ribosomal subunit protein bL21 (Prochlorococcus marinus (strain MIT 9515)).